Consider the following 209-residue polypeptide: Peroxynitrite isomerase 2 (209 aa).

A GXWXGXG motif is present at residues 56–62 (GVWRGEG). Heme b-binding residues include K172 and H199.

It belongs to the nitrobindin family. Homodimer. The cofactor is heme b.

The enzyme catalyses peroxynitrite = nitrate. The protein operates within nitrogen metabolism. Its function is as follows. Heme-binding protein able to scavenge peroxynitrite and to protect free L-tyrosine against peroxynitrite-mediated nitration, by acting as a peroxynitrite isomerase that converts peroxynitrite to nitrate. Therefore, this protein likely plays a role in peroxynitrite sensing and in the detoxification of reactive nitrogen and oxygen species (RNS and ROS, respectively). Is able to bind nitric oxide (NO) in vitro, but may act as a sensor of peroxynitrite levels in vivo. In Mycolicibacterium vanbaalenii (strain DSM 7251 / JCM 13017 / BCRC 16820 / KCTC 9966 / NRRL B-24157 / PYR-1) (Mycobacterium vanbaalenii), this protein is Peroxynitrite isomerase 2.